Consider the following 65-residue polypeptide: Large ribosomal subunit protein bL31 (65 aa).

4 residues coordinate Zn(2+): C16, C18, C36, and C39.

This sequence belongs to the bacterial ribosomal protein bL31 family. Type A subfamily. Part of the 50S ribosomal subunit. Requires Zn(2+) as cofactor.

Binds the 23S rRNA. The sequence is that of Large ribosomal subunit protein bL31 from Alkaliphilus metalliredigens (strain QYMF).